Here is a 258-residue protein sequence, read N- to C-terminus: Global transcriptional regulator CodY (258 aa).

A GAF domain region spans residues methionine 1–leucine 156. The segment at residues alanine 204 to arginine 223 is a DNA-binding region (H-T-H motif).

Belongs to the CodY family.

It localises to the cytoplasm. Its function is as follows. DNA-binding global transcriptional regulator which is involved in the adaptive response to starvation and acts by directly or indirectly controlling the expression of numerous genes in response to nutrient availability. During rapid exponential growth, CodY is highly active and represses genes whose products allow adaptation to nutrient depletion. The sequence is that of Global transcriptional regulator CodY from Clostridium kluyveri (strain NBRC 12016).